Here is a 503-residue protein sequence, read N- to C-terminus: Aspartyl/glutamyl-tRNA(Asn/Gln) amidotransferase subunit B (503 aa).

Belongs to the GatB/GatE family. GatB subfamily. In terms of assembly, heterotrimer of A, B and C subunits.

It carries out the reaction L-glutamyl-tRNA(Gln) + L-glutamine + ATP + H2O = L-glutaminyl-tRNA(Gln) + L-glutamate + ADP + phosphate + H(+). The catalysed reaction is L-aspartyl-tRNA(Asn) + L-glutamine + ATP + H2O = L-asparaginyl-tRNA(Asn) + L-glutamate + ADP + phosphate + 2 H(+). Its function is as follows. Allows the formation of correctly charged Asn-tRNA(Asn) or Gln-tRNA(Gln) through the transamidation of misacylated Asp-tRNA(Asn) or Glu-tRNA(Gln) in organisms which lack either or both of asparaginyl-tRNA or glutaminyl-tRNA synthetases. The reaction takes place in the presence of glutamine and ATP through an activated phospho-Asp-tRNA(Asn) or phospho-Glu-tRNA(Gln). The sequence is that of Aspartyl/glutamyl-tRNA(Asn/Gln) amidotransferase subunit B from Jannaschia sp. (strain CCS1).